A 500-amino-acid polypeptide reads, in one-letter code: Aspartyl/glutamyl-tRNA(Asn/Gln) amidotransferase subunit B (500 aa).

This sequence belongs to the GatB/GatE family. GatB subfamily. As to quaternary structure, heterotrimer of A, B and C subunits.

The enzyme catalyses L-glutamyl-tRNA(Gln) + L-glutamine + ATP + H2O = L-glutaminyl-tRNA(Gln) + L-glutamate + ADP + phosphate + H(+). It catalyses the reaction L-aspartyl-tRNA(Asn) + L-glutamine + ATP + H2O = L-asparaginyl-tRNA(Asn) + L-glutamate + ADP + phosphate + 2 H(+). Functionally, allows the formation of correctly charged Asn-tRNA(Asn) or Gln-tRNA(Gln) through the transamidation of misacylated Asp-tRNA(Asn) or Glu-tRNA(Gln) in organisms which lack either or both of asparaginyl-tRNA or glutaminyl-tRNA synthetases. The reaction takes place in the presence of glutamine and ATP through an activated phospho-Asp-tRNA(Asn) or phospho-Glu-tRNA(Gln). This Rhizobium leguminosarum bv. trifolii (strain WSM2304) protein is Aspartyl/glutamyl-tRNA(Asn/Gln) amidotransferase subunit B.